The chain runs to 1013 residues: Poly [ADP-ribose] polymerase 1 (1013 aa).

Residue Ala-2 is modified to N-acetylalanine. Residues 9 to 93 (YRVQYAKSGR…KVKKTAEAGG (85 aa)) form a PARP-type 1 zinc finger. The Zn(2+) site is built by Cys-21 and Cys-24. Ser-41 bears the Phosphoserine mark. 2 residues coordinate Zn(2+): His-53 and Cys-56. N6-acetyllysine occurs at positions 97 and 105. The segment at 113–203 (FAAEYAKSNR…ALKKQLPAIK (91 aa)) adopts a PARP-type 2 zinc-finger fold. 2 residues coordinate Zn(2+): Cys-125 and Cys-128. Lys-131 carries the post-translational modification N6-acetyllysine. Zn(2+) contacts are provided by His-159 and Cys-162. A phosphoserine mark is found at Ser-177, Ser-179, and Ser-185. Residue Lys-192 forms a Glycyl lysine isopeptide (Lys-Gly) (interchain with G-Cter in SUMO2) linkage. Positions 200–226 (PAIKNEGKRKGDEVDGTDEVAKKKSRK) are disordered. Lys-203 participates in a covalent cross-link: Glycyl lysine isopeptide (Lys-Gly) (interchain with G-Cter in SUMO1); alternate. Residue Lys-203 forms a Glycyl lysine isopeptide (Lys-Gly) (interchain with G-Cter in SUMO2); alternate linkage. Residues 204–226 (NEGKRKGDEVDGTDEVAKKKSRK) show a composition bias toward basic and acidic residues. 2 consecutive short sequence motifs (nuclear localization signal) follow at residues 207–209 (KRK) and 221–226 (KKKSRK). The PADR1 zinc-binding domain maps to 225–359 (RKETDKYSKL…VKKQDRIFPP (135 aa)). Lys-249 is covalently cross-linked (Glycyl lysine isopeptide (Lys-Gly) (interchain with G-Cter in SUMO2)). Phosphoserine occurs at positions 274 and 277. Residues 290 to 332 (GALLPCKECSGQLVFKSDAYYCTGDVTAWTKCMVKTQNPSRKE) are zinc ribbon. Residues Cys-295, Cys-298, Cys-311, and Cys-321 each coordinate Zn(2+). The interval 373–523 (VTSAPTAVNS…GVNKSEKRMK (151 aa)) is automodification domain. The region spanning 385-476 (PADKPLSNMK…KSLQDLLSAH (92 aa)) is the BRCT domain. Position 387 is a polyADP-ribosyl aspartic acid (Asp-387). Glu-407, Glu-413, Glu-435, Glu-437, Glu-444, Glu-445, Glu-448, and Glu-456 each carry polyADP-ribosyl glutamic acid. Lys-467 participates in a covalent cross-link: Glycyl lysine isopeptide (Lys-Gly) (interchain with G-Cter in SUMO2). Residue Glu-484 is modified to PolyADP-ribosyl glutamic acid. Residue Lys-486 forms a Glycyl lysine isopeptide (Lys-Gly) (interchain with G-Cter in SUMO1); alternate linkage. A Glycyl lysine isopeptide (Lys-Gly) (interchain with G-Cter in SUMO2); alternate cross-link involves residue Lys-486. 2 positions are modified to polyADP-ribosyl glutamic acid: Glu-488 and Glu-491. The segment at 489 to 508 (PGEVVAPRGKSAAPSKKSKG) is disordered. Low complexity predominate over residues 494–503 (APRGKSAAPS). Ser-499, Ser-503, and Ser-506 each carry ADP-ribosylserine. Lys-511 is covalently cross-linked (Glycyl lysine isopeptide (Lys-Gly) (interchain with G-Cter in SUMO2)). PolyADP-ribosyl glutamic acid occurs at positions 512 and 513. Ser-518 is modified (ADP-ribosylserine). Glu-519 is subject to PolyADP-ribosyl glutamic acid. An N6-(ADP-ribosyl)lysine modification is found at Lys-520. A Glycyl lysine isopeptide (Lys-Gly) (interchain with G-Cter in SUMO2) cross-link involves residue Lys-527. The WGR domain maps to 541–637 (SAHVLEKGGK…KNFTKYPKKF (97 aa)). Residue Thr-593 is modified to Phosphothreonine. Residues Lys-599 and Lys-620 each carry the N6-acetyllysine modification. The PARP alpha-helical domain occupies 661-778 (KSKLPKPVQE…DIEVAYSLLR (118 aa)). Lys-747 participates in a covalent cross-link: Glycyl lysine isopeptide (Lys-Gly) (interchain with G-Cter in SUMO1); alternate. Lys-747 is covalently cross-linked (Glycyl lysine isopeptide (Lys-Gly) (interchain with G-Cter in SUMO2); alternate). Residues Ser-781 and Ser-785 each carry the phosphoserine modification. The 227-residue stretch at 787–1013 (DPIDVNYEKL…LKFNFKTSLW (227 aa)) folds into the PARP catalytic domain. Residues 861-863 (HGS), Gly-870, Arg-877, and Ser-903 contribute to the NAD(+) site. Glu-987 functions as the For poly [ADP-ribose] polymerase activity in the catalytic mechanism.

The protein belongs to the ARTD/PARP family. In terms of assembly, homodimer; PARP-type zinc-fingers from separate PARP1 molecules form a dimer module that specifically recognizes DNA strand breaks. Heterodimer; heterodimerizes with PARP2. Interacts (via the PARP catalytic domain) with HPF1. Interacts with NMNAT1. Interacts with nucleosomes; with a preference for nucleosomes containing H2A.X. Interacts with APTX. Component of a base excision repair (BER) complex, containing at least XRCC1, PARP1, PARP2, POLB and LRIG3. Interacts with SRY. The SWAP complex consists of NPM1, NCL, PARP1 and SWAP70. Interacts with TIAM2. Interacts with PARP3; leading to activate PARP1 in absence of DNA. Interacts (when poly-ADP-ribosylated) with CHD1L (via macro domain). Interacts with the DNA polymerase alpha catalytic subunit POLA1; this interaction functions as part of the control of replication fork progression. Interacts with EEF1A1 and TXK. Interacts with RNF4. Interacts with RNF146. Interacts with ZNF423. Interacts with APLF. Interacts with SNAI1 (via zinc fingers); the interaction requires SNAI1 to be poly-ADP-ribosylated and non-phosphorylated (active) by GSK3B. Interacts (when poly-ADP-ribosylated) with PARP9. Interacts with NR4A3; activates PARP1 by improving acetylation of PARP1 and suppressing the interaction between PARP1 and SIRT1. Interacts (via catalytic domain) with PUM3; the interaction inhibits the poly-ADP-ribosylation activity of PARP1 and the degradation of PARP1 by CASP3 following genotoxic stress. Interacts with ZNF365. Interacts with RRP1B. Interacts with TIMELESS; the interaction is direct. Interacts with CGAS; leading to impede the formation of the PARP1-TIMELESS complex. Interacts with KHDC3L, the interaction is increased following the formation of DNA double-strand breaks. Interacts (when auto-poly-ADP-ribosylated) with XRCC1; leading to inhibit PARP1 ADP-ribosyltransferase activity. Interacts with SPINDOC; promoting PARP1 ADP-ribosyltransferase activity. Interacts with BANF1; leading to inhibit PARP1 ADP-ribosyltransferase activity in response to oxidative DNA damage. Interacts (when sumoylated and ubiquitinated) with VCP/p97; leading to its extraction from chromatin. Interacts with YARS1; promoting PARP1 ADP-ribosyltransferase activity. Interacts with PACMP micropeptide; Interacts with PACMP micropeptide; interaction. Interacts (when poly-ADP-ribosylated) with isoform 1 of MACROH2A1; MACROH2A1 specifically binds to poly-ADP-ribose chains and inhibits PARP1 activity, limiting the consumption of nuclear NAD(+). Interacts with CARM1; promoting recruitment to replication forks. Interacts with RECQL. Interacts with ZNF32; the interaction reshapes ZNF432 interacting proteins. Interacts with TPRN; TPRN interacts with a number of DNA damage response proteins, is recruited to sites of DNA damage and may play a role in DNA damage repair. Interacts (when auto-poly-ADP-ribosylated) with AIFM1. In terms of processing, poly-ADP-ribosylated on serine, glutamate and aspartate residues by autocatalysis. Auto-ADP-ribosylation on serine takes place following interaction with HPF1. Auto poly-ADP-ribosylation on serine residues promotes its dissociation from chromatin. Poly-ADP-ribosylated by PARP2; poly-ADP-ribosylation mediates the recruitment of CHD1L to DNA damage sites. Mono-ADP-ribosylated at Lys-520 by SIRT6 in response to oxidative stress, promoting recruitment to double-strand breaks (DSBs) sites. Post-translationally, S-nitrosylated, leading to inhibit transcription regulation activity. Phosphorylated at Thr-593 by PRKDC in response to DNA damage following virus infection, promoting its translocation to the cytosol. Phosphorylated by TXK. In terms of processing, proteolytically cleaved by caspase-3 (CASP3) and caspase-7 (CASP7) in response to apoptosis to generate the Poly [ADP-ribose] polymerase 1, processed N-terminus and Poly [ADP-ribose] polymerase 1, processed C-terminus forms. Post-translationally, sumoylated with SUMO1 or SUMO2 by PIAS4 following prolonged residence (trapping) to chromatin. Sumoylation promotes ubiquitination by RNF4 and removal from chromatin by VCP/p97. Ubiquitinated by RNF4 following sumoylation by PIAS4 in response to prolonged residence (trapping) to chromatin. Ubiquitination promotes removal from chromatin by VCP/p97. Widely expressed. Expression is correlated with proliferation, with higher levels occurring during early fetal development and organogenesis and in the highly proliferative cell compartments of adult. Expressed in B-cells that have been induced to switch to various Ig isotypes.

Its subcellular location is the chromosome. The protein localises to the nucleus. The protein resides in the nucleolus. It is found in the cytoplasm. It localises to the cytosol. It carries out the reaction NAD(+) + (ADP-D-ribosyl)n-acceptor = nicotinamide + (ADP-D-ribosyl)n+1-acceptor + H(+).. It catalyses the reaction L-seryl-[protein] + NAD(+) = O-(ADP-D-ribosyl)-L-seryl-[protein] + nicotinamide + H(+). The enzyme catalyses L-aspartyl-[protein] + NAD(+) = 4-O-(ADP-D-ribosyl)-L-aspartyl-[protein] + nicotinamide. The catalysed reaction is L-glutamyl-[protein] + NAD(+) = 5-O-(ADP-D-ribosyl)-L-glutamyl-[protein] + nicotinamide. It carries out the reaction L-tyrosyl-[protein] + NAD(+) = O-(ADP-D-ribosyl)-L-tyrosyl-[protein] + nicotinamide + H(+). It catalyses the reaction L-histidyl-[protein] + NAD(+) = N(tele)-(ADP-D-ribosyl)-L-histidyl-[protein] + nicotinamide + H(+). With respect to regulation, ADP-ribosyltransferase activity is regulated via an allosteric activation mechanism. In absence of activation signal, PARP1 is autoinhibited by the PARP alpha-helical domain (also named HD region), which prevents effective NAD(+)-binding. Activity is highly stimulated by signals, such as DNA strand breaks. Binding to damaged DNA unfolds the PARP alpha-helical domain, relieving autoinhibition. Poly-ADP-ribosyltransferase activity is tightly regulated and PARP1 is removed from damaged chromatin following initial poly-ADP-ribosylation of chromatin to avoid prolonged residence (trapping) that has cytotoxic consequences. A number of factors (VCP/p97) or post-translational modifications (auto-poly-ADP-ribosylation or ubiquitination) promote PARP1 removal from chromatin. Poly-ADP-ribosyltransferase that mediates poly-ADP-ribosylation of proteins and plays a key role in DNA repair. Mediates glutamate, aspartate, serine, histidine or tyrosine ADP-ribosylation of proteins: the ADP-D-ribosyl group of NAD(+) is transferred to the acceptor carboxyl group of target residues and further ADP-ribosyl groups are transferred to the 2'-position of the terminal adenosine moiety, building up a polymer with an average chain length of 20-30 units. Serine ADP-ribosylation of proteins constitutes the primary form of ADP-ribosylation of proteins in response to DNA damage. Specificity for the different amino acids is conferred by interacting factors, such as HPF1 and NMNAT1. Following interaction with HPF1, catalyzes serine ADP-ribosylation of target proteins; HPF1 confers serine specificity by completing the PARP1 active site. Also catalyzes tyrosine ADP-ribosylation of target proteins following interaction with HPF1. Following interaction with NMNAT1, catalyzes glutamate and aspartate ADP-ribosylation of target proteins; NMNAT1 confers glutamate and aspartate specificity. PARP1 initiates the repair of DNA breaks: recognizes and binds DNA breaks within chromatin and recruits HPF1, licensing serine ADP-ribosylation of target proteins, such as histones (H2BS6ADPr and H3S10ADPr), thereby promoting decompaction of chromatin and the recruitment of repair factors leading to the reparation of DNA strand breaks. HPF1 initiates serine ADP-ribosylation but restricts the polymerase activity of PARP1 in order to limit the length of poly-ADP-ribose chains. In addition to base excision repair (BER) pathway, also involved in double-strand breaks (DSBs) repair: together with TIMELESS, accumulates at DNA damage sites and promotes homologous recombination repair by mediating poly-ADP-ribosylation. Mediates the poly-ADP-ribosylation of a number of proteins, including itself, APLF, CHFR and NFAT5. In addition to proteins, also able to ADP-ribosylate DNA: catalyzes ADP-ribosylation of DNA strand break termini containing terminal phosphates and a 2'-OH group in single- and double-stranded DNA, respectively. Required for PARP9 and DTX3L recruitment to DNA damage sites. PARP1-dependent PARP9-DTX3L-mediated ubiquitination promotes the rapid and specific recruitment of 53BP1/TP53BP1, UIMC1/RAP80, and BRCA1 to DNA damage sites. PARP1-mediated DNA repair in neurons plays a role in sleep: senses DNA damage in neurons and promotes sleep, facilitating efficient DNA repair. In addition to DNA repair, also involved in other processes, such as transcription regulation, programmed cell death, membrane repair, adipogenesis and innate immunity. Acts as a repressor of transcription: binds to nucleosomes and modulates chromatin structure in a manner similar to histone H1, thereby altering RNA polymerase II. Acts both as a positive and negative regulator of transcription elongation, depending on the context. Acts as a positive regulator of transcription elongation by mediating poly-ADP-ribosylation of NELFE, preventing RNA-binding activity of NELFE and relieving transcription pausing. Acts as a negative regulator of transcription elongation in response to DNA damage by catalyzing poly-ADP-ribosylation of CCNT1, disrupting the phase separation activity of CCNT1 and subsequent activation of CDK9. Involved in replication fork progression following interaction with CARM1: mediates poly-ADP-ribosylation at replication forks, slowing fork progression. Poly-ADP-ribose chains generated by PARP1 also play a role in poly-ADP-ribose-dependent cell death, a process named parthanatos. Also acts as a negative regulator of the cGAS-STING pathway. Acts by mediating poly-ADP-ribosylation of CGAS: PARP1 translocates into the cytosol following phosphorylation by PRKDC and catalyzes poly-ADP-ribosylation and inactivation of CGAS. Acts as a negative regulator of adipogenesis: catalyzes poly-ADP-ribosylation of histone H2B on 'Glu-35' (H2BE35ADPr) following interaction with NMNAT1, inhibiting phosphorylation of H2B at 'Ser-36' (H2BS36ph), thereby blocking expression of pro-adipogenetic genes. Involved in the synthesis of ATP in the nucleus, together with NMNAT1, PARG and NUDT5. Nuclear ATP generation is required for extensive chromatin remodeling events that are energy-consuming. Functionally, promotes AIFM1-mediated apoptosis. This form, which translocates into the cytoplasm following cleavage by caspase-3 (CASP3) and caspase-7 (CASP7) in response to apoptosis, is auto-poly-ADP-ribosylated and serves as a poly-ADP-ribose carrier to induce AIFM1-mediated apoptosis. In terms of biological role, this cleavage form irreversibly binds to DNA breaks and interferes with DNA repair, promoting DNA damage-induced apoptosis. This chain is Poly [ADP-ribose] polymerase 1 (Parp1), found in Mus musculus (Mouse).